The chain runs to 118 residues: SPbeta prophage-derived uncharacterized protein YolB (118 aa).

This chain is SPbeta prophage-derived uncharacterized protein YolB (yolB), found in Bacillus subtilis (strain 168).